The following is a 353-amino-acid chain: MSMSTVPACIEPVAPLAPQAQDLRCFNTLGLASHAPAFVALTEPSQLPALSALAPRFRQLVVLGGGSNVVLPASIDGLVAQVRLPGVRLVGQCADAWVVEAAAGENWHGFVTACVDNGWDGLENLALIPGTVGAAPVQNIGAYGVELADRFHSLTAWDVKGGRWVEMGAAECRFAYRDSFFKHQEPGAWVIGSVRFALPRPWQPVLDYPDLQRHAALDGAAPTARAVYDAVCAIRRAKLPDPAVVGNAGSFFKNPLVDAGTRQALLGRFPGLVSYPQPDGRYKLAAGWLIDQCGWKGRQLGAAGVHDRQALVLVNRGGAQARDIMALAAAIQGDVERRYGVRLEPEPVVVPAR.

Residues 31–201 (LASHAPAFVA…GSVRFALPRP (171 aa)) enclose the FAD-binding PCMH-type domain. R177 is a catalytic residue. S250 functions as the Proton donor in the catalytic mechanism. E346 is an active-site residue.

This sequence belongs to the MurB family. The cofactor is FAD.

Its subcellular location is the cytoplasm. The enzyme catalyses UDP-N-acetyl-alpha-D-muramate + NADP(+) = UDP-N-acetyl-3-O-(1-carboxyvinyl)-alpha-D-glucosamine + NADPH + H(+). It participates in cell wall biogenesis; peptidoglycan biosynthesis. Cell wall formation. In Bordetella parapertussis (strain 12822 / ATCC BAA-587 / NCTC 13253), this protein is UDP-N-acetylenolpyruvoylglucosamine reductase.